A 589-amino-acid polypeptide reads, in one-letter code: Proton pump-interactor 2 (589 aa).

Residues 205–245 (EDSLAEKEASINRVKSMAVELNEVKKELDAITWKINHLSDK) adopt a coiled-coil conformation. Basic and acidic residues-rich tracts occupy residues 370–383 (KGGE…REDS), 395–408 (TDKR…KAMD), 426–450 (VYEK…REEQ), and 504–534 (ESDH…KERS). Disordered regions lie at residues 370–450 (KGGE…REEQ) and 485–534 (KECE…KERS). Residues 431–500 (KKEEEEVDEE…AKKKAAANSS (70 aa)) adopt a coiled-coil conformation. Residues 568-588 (WVWGLSSAALAVALFLVVLLL) traverse the membrane as a helical segment.

This sequence belongs to the plant Proton pump-interactor protein family. Expressed in seedlings and flowers.

It localises to the cell membrane. The protein resides in the endoplasmic reticulum membrane. Its function is as follows. May regulate plasma membrane ATPase activity. The chain is Proton pump-interactor 2 (PPI2) from Arabidopsis thaliana (Mouse-ear cress).